A 210-amino-acid chain; its full sequence is Small ribosomal subunit protein uS3 (210 aa).

One can recognise a KH type-2 domain in the interval 17–86; the sequence is IDEFLEKELR…NPQIDVQEIK (70 aa).

This sequence belongs to the universal ribosomal protein uS3 family. Part of the 30S ribosomal subunit.

Binds the lower part of the 30S subunit head. In Pyrococcus horikoshii (strain ATCC 700860 / DSM 12428 / JCM 9974 / NBRC 100139 / OT-3), this protein is Small ribosomal subunit protein uS3.